We begin with the raw amino-acid sequence, 255 residues long: Menaquinol:cytochrome c reductase cytochrome c subunit (255 aa).

3 consecutive transmembrane segments (helical) span residues 46 to 62 (WMVG…LTIV), 104 to 124 (VVGA…APFL), and 137 to 157 (VAVG…WQSV). Residues 178–253 (DTNAEGYKVF…ELAKFISETT (76 aa)) enclose the Cytochrome c domain. Heme c contacts are provided by cysteine 192, cysteine 195, and histidine 196.

It belongs to the cytochrome b family. As to quaternary structure, the main subunits of the menaquinol:cytochrome c complex are a Rieske-type iron-sulfur protein (QcrA), a cytochrome b (QcrB) and a cytochrome c (QcrC). It depends on heme c as a cofactor.

Its subcellular location is the cell membrane. Component of the menaquinol:cytochrome c reductase complex. This chain is Menaquinol:cytochrome c reductase cytochrome c subunit (qcrC), found in Bacillus subtilis (strain 168).